Consider the following 411-residue polypeptide: Dual-specificity RNA methyltransferase RlmN (411 aa).

Catalysis depends on Glu-125, which acts as the Proton acceptor. Positions 131–380 constitute a Radical SAM core domain; that stretch reads EEGRGTLCVS…IRTPRGRDIL (250 aa). The cysteines at positions 138 and 383 are disulfide-linked. 3 residues coordinate [4Fe-4S] cluster: Cys-145, Cys-149, and Cys-152. S-adenosyl-L-methionine contacts are provided by residues 209–210, Ser-241, 263–265, and Asn-340; these read GE and SLH. Catalysis depends on Cys-383, which acts as the S-methylcysteine intermediate.

The protein belongs to the radical SAM superfamily. RlmN family. It depends on [4Fe-4S] cluster as a cofactor.

The protein resides in the cytoplasm. The enzyme catalyses adenosine(2503) in 23S rRNA + 2 reduced [2Fe-2S]-[ferredoxin] + 2 S-adenosyl-L-methionine = 2-methyladenosine(2503) in 23S rRNA + 5'-deoxyadenosine + L-methionine + 2 oxidized [2Fe-2S]-[ferredoxin] + S-adenosyl-L-homocysteine. It carries out the reaction adenosine(37) in tRNA + 2 reduced [2Fe-2S]-[ferredoxin] + 2 S-adenosyl-L-methionine = 2-methyladenosine(37) in tRNA + 5'-deoxyadenosine + L-methionine + 2 oxidized [2Fe-2S]-[ferredoxin] + S-adenosyl-L-homocysteine. Specifically methylates position 2 of adenine 2503 in 23S rRNA and position 2 of adenine 37 in tRNAs. m2A2503 modification seems to play a crucial role in the proofreading step occurring at the peptidyl transferase center and thus would serve to optimize ribosomal fidelity. The polypeptide is Dual-specificity RNA methyltransferase RlmN (Brucella anthropi (strain ATCC 49188 / DSM 6882 / CCUG 24695 / JCM 21032 / LMG 3331 / NBRC 15819 / NCTC 12168 / Alc 37) (Ochrobactrum anthropi)).